Reading from the N-terminus, the 623-residue chain is Glutathione import ATP-binding protein GsiA (623 aa).

ABC transporter domains lie at 18–272 (VRNL…QGLL) and 317–567 (LQVS…RKLM). ATP-binding positions include 52 to 59 (GESGSGKS) and 360 to 367 (GESGCGKS).

This sequence belongs to the ABC transporter superfamily. Glutathione importer (TC 3.A.1.5.11) family. In terms of assembly, the complex is composed of two ATP-binding proteins (GsiA), two transmembrane proteins (GsiC and GsiD) and a solute-binding protein (GsiB).

The protein resides in the cell inner membrane. The enzyme catalyses glutathione(out) + ATP + H2O = glutathione(in) + ADP + phosphate + H(+). In terms of biological role, part of the ABC transporter complex GsiABCD involved in glutathione import. Responsible for energy coupling to the transport system. In Pectobacterium atrosepticum (strain SCRI 1043 / ATCC BAA-672) (Erwinia carotovora subsp. atroseptica), this protein is Glutathione import ATP-binding protein GsiA.